The primary structure comprises 393 residues: Envelope glycoprotein D (393 aa).

The N-terminal stretch at 1-25 (MGRLTSGVGTAALLVVAVGLRVVCA) is a signal peptide. An interaction with TNFRSF14 region spans residues 25–57 (AKYALADPSLKMADPNRFRGKNLPVLDQLTDPP). Residues 26–340 (KYALADPSLK…HAPAAPSNPG (315 aa)) are Virion surface-facing. H64 contacts Zn(2+). 3 disulfides stabilise this stretch: C91-C214, C131-C227, and C143-C152. Residues N119 and N146 are each glycosylated (N-linked (GlcNAc...) asparagine; by host). D240 lines the Zn(2+) pocket. Residues 261–305 (LKIAGWHGPKPPYTSTLLPPELSDTTNATQPELVPEDPEDSALLE) are profusion. Polar residues predominate over residues 274 to 290 (TSTLLPPELSDTTNATQ). The interval 274-301 (TSTLLPPELSDTTNATQPELVPEDPEDS) is disordered. An N-linked (GlcNAc...) asparagine; by host glycan is attached at N287. Residues 341–361 (LIIGALAGSTLAVLVIGGIAF) form a helical membrane-spanning segment. Topologically, residues 362–393 (WVRRRAQMAPKRLRLPHIRDDDAPPSHQPLFY) are intravirion.

The protein belongs to the herpesviridae glycoprotein D family. As to quaternary structure, homodimer. Interacts with host receptor TNFRSF14. Interacts with host receptor NECTIN1. Interacts with host receptor NECTIN2. Interacts (via profusion domain) with gB; this interaction occurs in the absence of gH/gL. Interacts (via profusion domain) with gH/gL heterodimer; this interaction occurs in the absence of gB. Associates with the gB-gH/gL-gD complex. Interacts (via C-terminus) with UL11 tegument protein.

The protein resides in the virion membrane. Envelope glycoprotein that binds to the host cell entry receptors NECTIN1 and TNFRSF14/HVEM, promoting the virus entry into host cells. May trigger fusion with host membrane, by recruiting the fusion machinery composed of gB and gH/gL. The protein is Envelope glycoprotein D (gD) of Human herpesvirus 2 (strain HG52) (HHV-2).